A 322-amino-acid polypeptide reads, in one-letter code: Arginase-1 (322 aa).

Lys17 carries the N6-succinyllysine modification. Ser62 and Ser72 each carry phosphoserine. Lys75 carries the N6-succinyllysine modification. Mn(2+)-binding residues include His101, Asp124, His126, and Asp128. Substrate contacts are provided by residues 126–130 (HTDIN) and 137–139 (SGN). Residue Ser163 is modified to Phosphoserine. Asp183 provides a ligand contact to substrate. Ser217 carries the post-translational modification Phosphoserine. Positions 232 and 234 each coordinate Mn(2+). Substrate contacts are provided by Thr246 and Glu277.

This sequence belongs to the arginase family. In terms of assembly, homotrimer. Interacts with CMTM6. Requires Mn(2+) as cofactor. As to expression, within the immune system initially reported to be selectively expressed in granulocytes (polymorphonuclear leukocytes [PMNs]). Also detected in macrophages mycobacterial granulomas. Expressed in group2 innate lymphoid cells (ILC2s) during lung disease.

It is found in the cytoplasm. The protein localises to the cytoplasmic granule. The catalysed reaction is L-arginine + H2O = urea + L-ornithine. It participates in nitrogen metabolism; urea cycle; L-ornithine and urea from L-arginine: step 1/1. Functionally, key element of the urea cycle converting L-arginine to urea and L-ornithine, which is further metabolized into metabolites proline and polyamides that drive collagen synthesis and bioenergetic pathways critical for cell proliferation, respectively; the urea cycle takes place primarily in the liver and, to a lesser extent, in the kidneys. Functions in L-arginine homeostasis in nonhepatic tissues characterized by the competition between nitric oxide synthase (NOS) and arginase for the available intracellular substrate arginine. Arginine metabolism is a critical regulator of innate and adaptive immune responses. Involved in an antimicrobial effector pathway in polymorphonuclear granulocytes (PMN). Upon PMN cell death is liberated from the phagolysosome and depletes arginine in the microenvironment leading to suppressed T cell and natural killer (NK) cell proliferation and cytokine secretion. In group 2 innate lymphoid cells (ILC2s) promotes acute type 2 inflammation in the lung and is involved in optimal ILC2 proliferation but not survival. In humans, the immunological role in the monocytic/macrophage/dendritic cell (DC) lineage is unsure. The chain is Arginase-1 (ARG1) from Homo sapiens (Human).